We begin with the raw amino-acid sequence, 326 residues long: MVVIGLDVGYGDTKVIGIDGKRIIFPSRWAVTETESWGIGGKIPVLSTDGGQTKFIYGRYASGNNIRVPQGDGRLASKEAFPLIAAALWESGIHNDGSPVDLVIGSGTPLGTFDLEVKAAKEALENKILTVTGPEGEVRQYNVTRLIMRPQGVGAALYLLNQGIIEQQPGYGVVIDVGSRTTDVLTINLMDMEPVVELSFSLQIGVGDAISNLSRKIAKETGFVVPFDLAQEALSKPVMFRQKQVGGPEVAGPILEDLANRIIENIRLNLRGEVDRITSLIPVGGGANLIGDRFDEIAPGTTVRIKPEDLQFANALGYRDAAERSM.

ATP contacts are provided by residues 10 to 14, S179, Q231, 285 to 288, and Q311; these read YGDTK and GGAN.

This sequence belongs to the thermophilic archaeal actin family.

In terms of biological role, polymerizes into bundles of filaments. Polymerization requires NTP and is optimal with ATP, but GTP, UTP, CTP, and even the deoxy form of NTP can also support the polymerization reaction. This is Archaeal actin homolog from Thermoplasma volcanium (strain ATCC 51530 / DSM 4299 / JCM 9571 / NBRC 15438 / GSS1).